Consider the following 475-residue polypeptide: Rho GTPase-activating protein 15 (475 aa).

Over residues 1-22 (MQKSTNSDTSVETLNSTRQGTG) the composition is skewed to polar residues. The disordered stretch occupies residues 1 to 23 (MQKSTNSDTSVETLNSTRQGTGA). Residues S43, S103, S196, S199, and S243 each carry the phosphoserine modification. The region spanning 79 to 189 (MVEKEGYLQK…WFHAIKNAID (111 aa)) is the PH domain. The 190-residue stretch at 281–470 (SHLHKVCERE…LMLSEYSKIF (190 aa)) folds into the Rho-GAP domain.

Expressed in lung, liver and lymphoid cells.

The protein localises to the cytoplasm. It localises to the membrane. Functionally, GTPase activator for the Rho-type GTPases by converting them to an inactive GDP-bound state. Has activity toward RAC1. Overexpression results in an increase in actin stress fibers and cell contraction. The sequence is that of Rho GTPase-activating protein 15 (ARHGAP15) from Homo sapiens (Human).